The primary structure comprises 654 residues: Acetyl-coenzyme A synthetase (654 aa).

Residues 190–193 (RGGK) and threonine 313 each bind CoA. Residues 389–391 (GEP), 413–418 (DTWWQT), aspartate 504, and arginine 519 each bind ATP. Serine 527 serves as a coordination point for CoA. Residue arginine 530 participates in ATP binding. 2 residues coordinate Mg(2+): valine 541 and valine 546. The residue at position 613 (lysine 613) is an N6-acetyllysine.

Belongs to the ATP-dependent AMP-binding enzyme family. Mg(2+) serves as cofactor. Post-translationally, acetylated. Deacetylation by the SIR2-homolog deacetylase activates the enzyme.

It catalyses the reaction acetate + ATP + CoA = acetyl-CoA + AMP + diphosphate. Its function is as follows. Catalyzes the conversion of acetate into acetyl-CoA (AcCoA), an essential intermediate at the junction of anabolic and catabolic pathways. AcsA undergoes a two-step reaction. In the first half reaction, AcsA combines acetate with ATP to form acetyl-adenylate (AcAMP) intermediate. In the second half reaction, it can then transfer the acetyl group from AcAMP to the sulfhydryl group of CoA, forming the product AcCoA. This chain is Acetyl-coenzyme A synthetase, found in Leptospira borgpetersenii serovar Hardjo-bovis (strain JB197).